The sequence spans 218 residues: Small ribosomal subunit protein uS3 (218 aa).

Residues 38 to 106 (IRDYVAKRLS…RVHINIVEIK (69 aa)) form the KH type-2 domain.

This sequence belongs to the universal ribosomal protein uS3 family. As to quaternary structure, part of the 30S ribosomal subunit. Forms a tight complex with proteins S10 and S14.

Its function is as follows. Binds the lower part of the 30S subunit head. Binds mRNA in the 70S ribosome, positioning it for translation. The chain is Small ribosomal subunit protein uS3 from Listeria monocytogenes serotype 4b (strain F2365).